The sequence spans 248 residues: 5'-nucleotidase SurE (248 aa).

D8, D9, S39, and N91 together coordinate a divalent metal cation.

It belongs to the SurE nucleotidase family. A divalent metal cation is required as a cofactor.

Its subcellular location is the cytoplasm. The enzyme catalyses a ribonucleoside 5'-phosphate + H2O = a ribonucleoside + phosphate. Nucleotidase that shows phosphatase activity on nucleoside 5'-monophosphates. The chain is 5'-nucleotidase SurE from Geotalea uraniireducens (strain Rf4) (Geobacter uraniireducens).